The chain runs to 227 residues: Lysosomal-associated transmembrane protein 4B (227 aa).

The next 4 membrane-spanning stretches (helical) occupy residues 26 to 46, 72 to 92, 100 to 120, and 153 to 173; these read ILLG…LLSA, MCIA…ATYG, WIIP…LVAI, and CLVL…GYLI. The interval 205-222 is required for NEDD4 interaction; the sequence is PPYDDATAVTGTAKEPPP.

It belongs to the LAPTM4/LAPTM5 transporter family. In terms of assembly, homooligomer; upon reaching the lysosomes. Interacts with MCOLN1. Interacts with NEDD4; may play a role in the lysosomal sorting of LAPTM4B; enhances HGS association with NEDD4; mediates inhibition of EGFR degradation. Interacts with PIP5K1C; promotes SNX5 association with LAPTM4B; kinase activity of PIP5K1C is required; interaction is regulated by phosphatidylinositol 4,5-bisphosphate generated by PIP5K1C. Interacts with HGS; promotes HGS ubiquitination. Interacts with SNX5. Interacts with SLC3A2 and SLC7A5; recruits SLC3A2 and SLC7A5 to lysosomes to promote leucine uptake into these organelles and is required for mTORC1 activation. Interacts with LRRC32; decreases TGFB1 production in regulatory T cells. Interacts with BECN1; competes with EGFR for LAPTM4B binding; regulates EGFR activity. Interacts with EGFR; positively correlates with EGFR activation. Post-translationally, undergoes proteolytic cleavage following delivery to the lysosomes. In terms of processing, ubiquitinated by NEDD4.

Its subcellular location is the endomembrane system. It localises to the late endosome membrane. The protein resides in the cell membrane. The protein localises to the cell projection. It is found in the lysosome membrane. Its subcellular location is the endosome membrane. It localises to the endosome. The protein resides in the multivesicular body membrane. The protein localises to the multivesicular body lumen. Its function is as follows. Required for optimal lysosomal function. Blocks EGF-stimulated EGFR intraluminal sorting and degradation. Conversely by binding with the phosphatidylinositol 4,5-bisphosphate, regulates its PIP5K1C interaction, inhibits HGS ubiquitination and relieves LAPTM4B inhibition of EGFR degradation. Recruits SLC3A2 and SLC7A5 (the Leu transporter) to the lysosome, promoting entry of leucine and other essential amino acid (EAA) into the lysosome, stimulating activation of proton-transporting vacuolar (V)-ATPase protein pump (V-ATPase) and hence mTORC1 activation. Plays a role as negative regulator of TGFB1 production in regulatory T cells. Binds ceramide and facilitates its exit from late endosome in order to control cell death pathways. The polypeptide is Lysosomal-associated transmembrane protein 4B (Rattus norvegicus (Rat)).